The sequence spans 310 residues: Probable cell division protein WhiA (310 aa).

Positions 277 to 310 (SLKELAEQVPDGPISKSGVNHRLKKLHEIAENLR) form a DNA-binding region, H-T-H motif.

This sequence belongs to the WhiA family.

In terms of biological role, involved in cell division and chromosome segregation. The chain is Probable cell division protein WhiA from Lactobacillus delbrueckii subsp. bulgaricus (strain ATCC 11842 / DSM 20081 / BCRC 10696 / JCM 1002 / NBRC 13953 / NCIMB 11778 / NCTC 12712 / WDCM 00102 / Lb 14).